The chain runs to 261 residues: MGQKIHPTGFRLAVTKNWSSRWYANSKDFPGMLNEDIKVREYLKRKLAHASVGRVLIERPAKNARVTVYSARPGVVIGKKGEDIEQLRTDLQRIMGVPVHVSIEEIRKPEIDAQLIADSIAQQLEKRIMFRRAMKRAMQNAMRLGAQGIKVMSAGRLNGAEIARSEWYREGRVPLHTLRADIDYATSEALTTYGIIGIKVWVYKGDMLDRNEQPVAEEPAADDRRPRRTPGRPDGDKPRTRTVKKVDGAADPAKRVRKAGA.

Residues 39 to 107 (VREYLKRKLA…PVHVSIEEIR (69 aa)) enclose the KH type-2 domain. Positions 213-261 (QPVAEEPAADDRRPRRTPGRPDGDKPRTRTVKKVDGAADPAKRVRKAGA) are disordered. Basic and acidic residues predominate over residues 221–254 (ADDRRPRRTPGRPDGDKPRTRTVKKVDGAADPAK).

Belongs to the universal ribosomal protein uS3 family. As to quaternary structure, part of the 30S ribosomal subunit. Forms a tight complex with proteins S10 and S14.

Its function is as follows. Binds the lower part of the 30S subunit head. Binds mRNA in the 70S ribosome, positioning it for translation. The polypeptide is Small ribosomal subunit protein uS3 (Dechloromonas aromatica (strain RCB)).